The chain runs to 233 residues: MSIHIGAKENEIAQTVLLPGDPLRAKYIAENFLEDAKCYNEVRGMYGFTGYYKGKRVSVQGTGMGVPSLSIYVNELINSYNVKNLIRIGTCGSLQPDIKLRDIVIAMSSSTDSAINKIRFNGMDYAPTASFKLLKKAYDKAMELGIQPKVGNILTTDTFYNDDPDSWKLWAKFGVLAVEMETAGLYTLAAKYNVDALTILTVSDSLVTGEATTAEERQKTFMNMVKIALEIAE.

H4 provides a ligand contact to a purine D-ribonucleoside. Residues G20, R24, R43, and 87–90 (RIGT) each bind phosphate. Residues 179-181 (EME) and 203-204 (SD) contribute to the a purine D-ribonucleoside site. D204 functions as the Proton donor in the catalytic mechanism.

Belongs to the PNP/UDP phosphorylase family. Homohexamer; trimer of homodimers.

The enzyme catalyses a purine D-ribonucleoside + phosphate = a purine nucleobase + alpha-D-ribose 1-phosphate. The catalysed reaction is a purine 2'-deoxy-D-ribonucleoside + phosphate = a purine nucleobase + 2-deoxy-alpha-D-ribose 1-phosphate. In terms of biological role, catalyzes the reversible phosphorolytic breakdown of the N-glycosidic bond in the beta-(deoxy)ribonucleoside molecules, with the formation of the corresponding free purine bases and pentose-1-phosphate. The chain is Purine nucleoside phosphorylase DeoD-type from Thermoanaerobacter pseudethanolicus (strain ATCC 33223 / 39E) (Clostridium thermohydrosulfuricum).